Here is a 205-residue protein sequence, read N- to C-terminus: Probable inactive peroxygenase-like protein (205 aa).

Residues 79 to 88 carry the Proline-knot motif; sequence PVQLFGYILP. Position 183 is a phosphoserine (Ser-183).

It belongs to the caleosin family.

The protein resides in the lipid droplet. The chain is Probable inactive peroxygenase-like protein from Arabidopsis thaliana (Mouse-ear cress).